The following is a 284-amino-acid chain: Nucleotide-binding protein PP_0949 (284 aa).

8 to 15 (GRSGSGKS) is an ATP binding site. Residue 60 to 63 (DARN) participates in GTP binding.

It belongs to the RapZ-like family.

Displays ATPase and GTPase activities. In Pseudomonas putida (strain ATCC 47054 / DSM 6125 / CFBP 8728 / NCIMB 11950 / KT2440), this protein is Nucleotide-binding protein PP_0949.